The chain runs to 400 residues: Tryptophan synthase beta chain (400 aa).

Lys-92 is subject to N6-(pyridoxal phosphate)lysine.

The protein belongs to the TrpB family. As to quaternary structure, tetramer of two alpha and two beta chains. Pyridoxal 5'-phosphate is required as a cofactor.

It carries out the reaction (1S,2R)-1-C-(indol-3-yl)glycerol 3-phosphate + L-serine = D-glyceraldehyde 3-phosphate + L-tryptophan + H2O. The protein operates within amino-acid biosynthesis; L-tryptophan biosynthesis; L-tryptophan from chorismate: step 5/5. The beta subunit is responsible for the synthesis of L-tryptophan from indole and L-serine. The polypeptide is Tryptophan synthase beta chain (Neisseria meningitidis serogroup C (strain 053442)).